A 59-amino-acid polypeptide reads, in one-letter code: Large ribosomal subunit protein uL30 (59 aa).

This sequence belongs to the universal ribosomal protein uL30 family. Part of the 50S ribosomal subunit.

This Geotalea daltonii (strain DSM 22248 / JCM 15807 / FRC-32) (Geobacter daltonii) protein is Large ribosomal subunit protein uL30.